A 238-amino-acid polypeptide reads, in one-letter code: Tetraspanin-4 (238 aa).

Residues 1–13 (MARACLQAVKYLM) lie on the Cytoplasmic side of the membrane. A helical membrane pass occupies residues 14–34 (FAFNLLFWLGGCGVLGVGIWL). Residues 35–55 (AATQGSFATLSSSFPSLSAAN) are Extracellular-facing. A helical membrane pass occupies residues 56–76 (LLIITGAFVMAIGFVGCLGAI). The Cytoplasmic portion of the chain corresponds to 77–85 (KENKCLLLT). The chain crosses the membrane as a helical span at residues 86–106 (FFLLLLLVFLLEATIAILFFA). The Extracellular portion of the chain corresponds to 107–201 (YTDKIDRYAQ…ETVKVWLQEN (95 aa)). Asn-152 and Asn-161 each carry an N-linked (GlcNAc...) asparagine glycan. Residues 202–222 (LLAVGIFGLCTALVQILGLTF) form a helical membrane-spanning segment. The Cytoplasmic segment spans residues 223–238 (AMTMYCQVVKADTYCA).

Belongs to the tetraspanin (TM4SF) family. As to quaternary structure, forms a complex with integrins.

The protein resides in the membrane. This is Tetraspanin-4 (TSPAN4) from Pongo abelii (Sumatran orangutan).